A 512-amino-acid polypeptide reads, in one-letter code: MQLKASEVYEALKQQLEDFDELSELSEVGYVISIGDGIAKVYGLSNAYSGEILQFSTGTKGIVFSLKDNLIEVVVIGSGDQIKQGSQVKRTQTSLKVPTGKELLGRVVDAIGNPIDGKGEFINPTYLDVEVKAPSVMCRDSVNEPMYTGIKAIDALIPIGKGQRELIIGDRQTGKTAIAIDIILNQKRFHLSDQEKEKVYCIYVAIGQKRSTVAQLVKKLQETGAMAYTTVVLSSASDAASLQYLAPYTGCAIGEYFRDNCMHALVIYDDLSKHAIAYRQISLLLRRPPAREAYPGDVFYLHSRLLERAAKLNKAKGEGSLTALPIVETQNSDVSAYIPTNIISITDGQIFLESELFYKGIKPALNVGISVSRVGAAAQIKAMKDIASSVKLELAQYHEMEAFSQFGADLDSSSMQLINRGRRLSELLKQSQYCPFPVEEQIIVLFAGINGYLDKIAVSKVKEFENNMLEYFRIHNPDIMNEIINTKKITEIISSKLHQILQEFVKSIEQCS.

169–176 (GDRQTGKT) is an ATP binding site.

Belongs to the ATPase alpha/beta chains family. F-type ATPases have 2 components, CF(1) - the catalytic core - and CF(0) - the membrane proton channel. CF(1) has five subunits: alpha(3), beta(3), gamma(1), delta(1), epsilon(1). CF(0) has three main subunits: a(1), b(2) and c(9-12). The alpha and beta chains form an alternating ring which encloses part of the gamma chain. CF(1) is attached to CF(0) by a central stalk formed by the gamma and epsilon chains, while a peripheral stalk is formed by the delta and b chains.

It localises to the cell inner membrane. The catalysed reaction is ATP + H2O + 4 H(+)(in) = ADP + phosphate + 5 H(+)(out). Its function is as follows. Produces ATP from ADP in the presence of a proton gradient across the membrane. The alpha chain is a regulatory subunit. The protein is ATP synthase subunit alpha of Orientia tsutsugamushi (strain Boryong) (Rickettsia tsutsugamushi).